We begin with the raw amino-acid sequence, 264 residues long: Leukocyte receptor cluster member 1 (264 aa).

Disordered stretches follow at residues 1–37 (MNILPKKSWHVRNKDNVARVRRDEAQAREEEKERERR) and 49–76 (FLRKKARHQNSLPELEAAEAGAPGSGPV). The segment covering 12–37 (RNKDNVARVRRDEAQAREEEKERERR) has biased composition (basic and acidic residues). The stretch at 16–46 (NVARVRRDEAQAREEEKERERRVLLAQQEAR) forms a coiled coil. Residue S59 is modified to Phosphoserine. The segment covering 59–75 (SLPELEAAEAGAPGSGP) has biased composition (low complexity). Residues 89–115 (VIRGNKEYKEEKRQEKERQEKALGILT) are a coiled coil. The tract at residues 118–264 (GQSAAEAQTQ…PRQQDPHLTH (147 aa)) is disordered. 2 stretches are compositionally biased toward basic and acidic residues: residues 146–162 (PDEKIKSRLDPLREMQK) and 170–214 (HGGD…RSRA). A coiled-coil region spans residues 196-222 (LDQLRAERLRREAAERSRAEALLARVQ). S245 carries the phosphoserine modification.

This chain is Leukocyte receptor cluster member 1 (LENG1), found in Homo sapiens (Human).